Here is a 600-residue protein sequence, read N- to C-terminus: Proline--tRNA ligase (600 aa).

The protein belongs to the class-II aminoacyl-tRNA synthetase family. ProS type 1 subfamily. In terms of assembly, homodimer.

It is found in the cytoplasm. It catalyses the reaction tRNA(Pro) + L-proline + ATP = L-prolyl-tRNA(Pro) + AMP + diphosphate. Its function is as follows. Catalyzes the attachment of proline to tRNA(Pro) in a two-step reaction: proline is first activated by ATP to form Pro-AMP and then transferred to the acceptor end of tRNA(Pro). As ProRS can inadvertently accommodate and process non-cognate amino acids such as alanine and cysteine, to avoid such errors it has two additional distinct editing activities against alanine. One activity is designated as 'pretransfer' editing and involves the tRNA(Pro)-independent hydrolysis of activated Ala-AMP. The other activity is designated 'posttransfer' editing and involves deacylation of mischarged Ala-tRNA(Pro). The misacylated Cys-tRNA(Pro) is not edited by ProRS. This chain is Proline--tRNA ligase, found in Acaryochloris marina (strain MBIC 11017).